The following is a 71-amino-acid chain: Small ribosomal subunit protein bS21 (71 aa).

The protein belongs to the bacterial ribosomal protein bS21 family.

The chain is Small ribosomal subunit protein bS21 from Shewanella sediminis (strain HAW-EB3).